The chain runs to 652 residues: DNA mismatch repair protein MutL (652 aa).

Belongs to the DNA mismatch repair MutL/HexB family.

Its function is as follows. This protein is involved in the repair of mismatches in DNA. It is required for dam-dependent methyl-directed DNA mismatch repair. May act as a 'molecular matchmaker', a protein that promotes the formation of a stable complex between two or more DNA-binding proteins in an ATP-dependent manner without itself being part of a final effector complex. This is DNA mismatch repair protein MutL from Neorickettsia sennetsu (strain ATCC VR-367 / Miyayama) (Ehrlichia sennetsu).